The following is a 306-amino-acid chain: Protoheme IX farnesyltransferase (306 aa).

Transmembrane regions (helical) follow at residues 31–50, 55–77, 104–124, 125–145, 168–188, 218–235, 238–258, and 286–306; these read VIELLLVTTAPVMILAQGGW, LILGVLVGGTLSAGSANAFNCYI, LVFAWIIGVASIVWLGVISNW, LAAALSLAAILFYVFVYTLWL, WAAVTGDISWAPVILFMIVFL, GRAAVGLQTILYAWATLA, LLLIPVAGMGLVYTLAALAGG, and ASISYLSLLFLAVGIDPLLPF.

The protein belongs to the UbiA prenyltransferase family. Protoheme IX farnesyltransferase subfamily.

The protein resides in the cell membrane. It catalyses the reaction heme b + (2E,6E)-farnesyl diphosphate + H2O = Fe(II)-heme o + diphosphate. It participates in porphyrin-containing compound metabolism; heme O biosynthesis; heme O from protoheme: step 1/1. Functionally, converts heme B (protoheme IX) to heme O by substitution of the vinyl group on carbon 2 of heme B porphyrin ring with a hydroxyethyl farnesyl side group. This Clavibacter michiganensis subsp. michiganensis (strain NCPPB 382) protein is Protoheme IX farnesyltransferase.